A 279-amino-acid chain; its full sequence is Fructose-1,6-bisphosphatase class 1 (279 aa).

Glu65, Asp85, Leu87, and Asp88 together coordinate Mg(2+). Residues 88–91 (DGSS), Tyr190, and Lys221 each bind substrate. Residue Glu227 coordinates Mg(2+).

The protein belongs to the FBPase class 1 family. In terms of assembly, homotetramer. The cofactor is Mg(2+).

The protein localises to the cytoplasm. It carries out the reaction beta-D-fructose 1,6-bisphosphate + H2O = beta-D-fructose 6-phosphate + phosphate. Its pathway is carbohydrate biosynthesis; gluconeogenesis. The protein is Fructose-1,6-bisphosphatase class 1 of Helicobacter hepaticus (strain ATCC 51449 / 3B1).